The following is a 220-amino-acid chain: Deoxyribose-phosphate aldolase 1 (220 aa).

Asp-89 functions as the Proton donor/acceptor in the catalytic mechanism. Lys-151 (schiff-base intermediate with acetaldehyde) is an active-site residue. The Proton donor/acceptor role is filled by Lys-180.

Belongs to the DeoC/FbaB aldolase family. DeoC type 1 subfamily.

It localises to the cytoplasm. The catalysed reaction is 2-deoxy-D-ribose 5-phosphate = D-glyceraldehyde 3-phosphate + acetaldehyde. It participates in carbohydrate degradation; 2-deoxy-D-ribose 1-phosphate degradation; D-glyceraldehyde 3-phosphate and acetaldehyde from 2-deoxy-alpha-D-ribose 1-phosphate: step 2/2. Functionally, catalyzes a reversible aldol reaction between acetaldehyde and D-glyceraldehyde 3-phosphate to generate 2-deoxy-D-ribose 5-phosphate. The sequence is that of Deoxyribose-phosphate aldolase 1 from Mesoplasma florum (strain ATCC 33453 / NBRC 100688 / NCTC 11704 / L1) (Acholeplasma florum).